The sequence spans 468 residues: UDP-N-acetylmuramate--L-alanine ligase (468 aa).

114-120 provides a ligand contact to ATP; the sequence is GTHGKTT.

It belongs to the MurCDEF family.

It is found in the cytoplasm. It carries out the reaction UDP-N-acetyl-alpha-D-muramate + L-alanine + ATP = UDP-N-acetyl-alpha-D-muramoyl-L-alanine + ADP + phosphate + H(+). The protein operates within cell wall biogenesis; peptidoglycan biosynthesis. Functionally, cell wall formation. This Methylocella silvestris (strain DSM 15510 / CIP 108128 / LMG 27833 / NCIMB 13906 / BL2) protein is UDP-N-acetylmuramate--L-alanine ligase.